A 101-amino-acid polypeptide reads, in one-letter code: Small ribosomal subunit protein uS14 (101 aa).

It belongs to the universal ribosomal protein uS14 family. In terms of assembly, part of the 30S ribosomal subunit. Contacts proteins S3 and S10.

Binds 16S rRNA, required for the assembly of 30S particles and may also be responsible for determining the conformation of the 16S rRNA at the A site. In Paraburkholderia phytofirmans (strain DSM 17436 / LMG 22146 / PsJN) (Burkholderia phytofirmans), this protein is Small ribosomal subunit protein uS14.